A 95-amino-acid polypeptide reads, in one-letter code: Co-chaperonin GroES (95 aa).

The protein belongs to the GroES chaperonin family. As to quaternary structure, heptamer of 7 subunits arranged in a ring. Interacts with the chaperonin GroEL.

It is found in the cytoplasm. In terms of biological role, together with the chaperonin GroEL, plays an essential role in assisting protein folding. The GroEL-GroES system forms a nano-cage that allows encapsulation of the non-native substrate proteins and provides a physical environment optimized to promote and accelerate protein folding. GroES binds to the apical surface of the GroEL ring, thereby capping the opening of the GroEL channel. This chain is Co-chaperonin GroES, found in Ruthia magnifica subsp. Calyptogena magnifica.